The primary structure comprises 397 residues: Bifunctional arginine demethylase and lysyl-hydroxylase psr-1 (397 aa).

Residues 146–310 enclose the JmjC domain; that stretch reads RKTKKLSEDY…LVWPKTVRGR (165 aa). Substrate is bound at residue Thr189. Residues His192 and Asp194 each coordinate Fe cation. Asn202 serves as a coordination point for 2-oxoglutarate. Substrate is bound at residue Lys209. His278 lines the Fe cation pocket. Position 290 (Thr290) interacts with 2-oxoglutarate. Positions 334-344 are enriched in polar residues; that stretch reads SCTDTPPQSLN. The tract at residues 334–383 is disordered; the sequence is SCTDTPPQSLNDSSSDSSSSSSSSDDSSDSETEEDSGRCGLGNRKRRNDV. The span at 345 to 358 shows a compositional bias: low complexity; it reads DSSSDSSSSSSSSD.

This sequence belongs to the JMJD6 family. As to quaternary structure, interacts with ced-5 and ced-12. Fe(2+) is required as a cofactor.

The protein localises to the nucleus. Dioxygenase that can both act as a histone arginine demethylase and a lysyl-hydroxylase. The chain is Bifunctional arginine demethylase and lysyl-hydroxylase psr-1 (psr-1) from Caenorhabditis briggsae.